A 73-amino-acid polypeptide reads, in one-letter code: Carboxysome shell vertex protein CsoS4B (73 aa).

The BMV domain occupies 1-68 (MVCTQRVAGL…TDLTIGGIID (68 aa)).

The protein belongs to the CcmL/EutN family. CsoS4 subfamily. In terms of assembly, homopentamer.

It is found in the carboxysome. Functionally, probably forms vertices in the carboxysome, a polyhedral inclusion where RuBisCO (ribulose bisphosphate carboxylase, cbbL-cbbS) is sequestered. Has been modeled to induce curvature upon insertion into an otherwise flat hexagonal layer of major carboxysome subunits. Has not been identified in purified carboxysomes; it is expected to be present in very low amounts. The chain is Carboxysome shell vertex protein CsoS4B from Prochlorococcus marinus subsp. pastoris (strain CCMP1986 / NIES-2087 / MED4).